A 1022-amino-acid chain; its full sequence is Polyamine-modulated factor 1-binding protein 1 (1022 aa).

5 coiled-coil regions span residues 89–121, 169–281, 312–377, 411–732, and 758–968; these read NKQY…LQAS, EKLH…ACSN, SEDC…LREE, LKKD…SAIQ, and QDDL…KAGN. Basic and acidic residues-rich tracts occupy residues 545–556 and 571–582; these read QKESSKIEEERK and EGQRRLSNAEKE. Positions 545–582 are disordered; sequence QKESSKIEEERKHNRQRLQELSSELSEGQRRLSNAEKE.

In terms of tissue distribution, expressed in the testis.

It is found in the cell projection. Its subcellular location is the cilium. The protein resides in the flagellum. Required for normal spermatogenesis. It functions as a scaffold protein that attaches the sperm head-tail connecting piece to the nuclear envelope, thus maintaining sperm head and tail integrity. May also be involved in the general organization of cellular cytoskeleton. This chain is Polyamine-modulated factor 1-binding protein 1 (Pmfbp1), found in Mus musculus (Mouse).